Consider the following 188-residue polypeptide: Protease-associated domain-containing protein 1 (188 aa).

The N-terminal stretch at 1-21 is a signal peptide; it reads MSRGAAGWCCLVLWLPTCVAA. Residues 83–163 enclose the PA domain; the sequence is IQDQIALVER…RSLEQHGLPW (81 aa). Residues N121 and N171 are each glycosylated (N-linked (GlcNAc...) asparagine).

Post-translationally, N-glycosylated; required for efficient secretion. As to expression, expressed in metabolically active tissues such as liver, muscle, adipose, and heart and different brain regions like cortex and hypothalamus, expression is acutely regulated by the nutritional state.

It is found in the secreted. Its function is as follows. Plays a role in the modulation of physical activity and adiposity. The chain is Protease-associated domain-containing protein 1 from Mus musculus (Mouse).